The chain runs to 250 residues: Putative apoptosis inhibitor ORF99 (250 aa).

The stretch at 13-78 is one BIR repeat; it reads RVNSFGGWSK…KFSGDCLYLK (66 aa).

Functionally, may act as an apoptosis inhibitor. This Ostreid herpesvirus 1 (isolate France) (OsHV-1) protein is Putative apoptosis inhibitor ORF99.